A 406-amino-acid polypeptide reads, in one-letter code: MTFSVDKVRADFPVLSREVNGLPLAYLDSAASAQKPSQVIDAEAEFYRHGYAAVHRGIHTLSAQATEKMENVRKRASLFINARSAEELVFVRGTTEGINLVANSWGNSNVRAGDNIIISQMEHHANIVPWQMLCARVGAELRVIPLNPDGTLQLETLPTLFDEKTRLLAITHVSNVLGTENPLAEMITLAHQHGAKVLVDGAQAVMHHPVDVQALDCDFYVFSGHKLYGPTGIGILYVKEALLQEMPPWEGGGSMIATVSLSEGTTWTKAPWRFEAGTPNTGGIIGLGAALEYVSALGLNNIAEYEQNLMHYALSQLESVPDLTLYGPQNRLGVIAFNLGKHHAYDVGSFLDNYGIAVRTGHHCAMPLMAYYNVPAMCRASLAMYNTHEEVDRLVTGLQRIHRLLG.

Residue lysine 226 is modified to N6-(pyridoxal phosphate)lysine. Cysteine 364 acts as the Cysteine persulfide intermediate in catalysis.

Belongs to the class-V pyridoxal-phosphate-dependent aminotransferase family. Csd subfamily. As to quaternary structure, homodimer. Interacts with SufE and the SufBCD complex composed of SufB, SufC and SufD. The interaction with SufE is required to mediate the direct transfer of the sulfur atom from the S-sulfanylcysteine. The cofactor is pyridoxal 5'-phosphate.

The protein localises to the cytoplasm. It carries out the reaction (sulfur carrier)-H + L-cysteine = (sulfur carrier)-SH + L-alanine. The enzyme catalyses L-selenocysteine + AH2 = hydrogenselenide + L-alanine + A + H(+). It functions in the pathway cofactor biosynthesis; iron-sulfur cluster biosynthesis. In terms of biological role, cysteine desulfurases mobilize the sulfur from L-cysteine to yield L-alanine, an essential step in sulfur metabolism for biosynthesis of a variety of sulfur-containing biomolecules. Component of the suf operon, which is activated and required under specific conditions such as oxidative stress and iron limitation. Acts as a potent selenocysteine lyase in vitro, that mobilizes selenium from L-selenocysteine. Selenocysteine lyase activity is however unsure in vivo. The chain is Cysteine desulfurase from Escherichia coli O45:K1 (strain S88 / ExPEC).